Consider the following 202-residue polypeptide: Putative NAD(P)H nitroreductase YodC (202 aa).

FMN-binding positions include 11–13 (RAS), 68–70 (QKQ), 155–156 (GG), and R192.

The protein belongs to the nitroreductase family. It depends on FMN as a cofactor.

It localises to the cytoplasm. Its function is as follows. Putative nitroreductase that may contribute to the degradation of aromatic compounds. This Bacillus subtilis (strain 168) protein is Putative NAD(P)H nitroreductase YodC (yodC).